The primary structure comprises 1117 residues: WD repeat and HMG-box DNA-binding protein 1 (1117 aa).

WD repeat units lie at residues 11-50 (GHTEGHTEVCFDDSGSYIVTCGSDGDVRMWEDLDDDDPKS), 52-91 (NVGEKAFSCALKNGKLVTAVSNNTVQVYTFPEGVPDGILT), 93-131 (FTTNANHVVFNGAGNKIAAGSSDFLVKVVDVMDNSQQQT), 134-173 (GHDAPVLSLSFDPKDIFLASASCDGTVRVWNISDQTCAVS), 184-223 (VNAKSICRLAWQPKAGKLLAVPVEKSVKLYRRETWSNPFD), 228-267 (SISQTLNIVTWSPCGQYLAAGAINGLIVVWNVETKDCMER), and 271-310 (EKGYAICGLAWHPTCSRICYTDVEGNLGVLENVCDLSGKV). A phosphoserine mark is found at S333 and S377. Residue K390 forms a Glycyl lysine isopeptide (Lys-Gly) (interchain with G-Cter in SUMO2) linkage. K664 is subject to N6-acetyllysine. The tract at residues 816 to 885 (LAETQSEEEK…NLFQSANSSD (70 aa)) is disordered. Phosphothreonine is present on T819. Position 821 is a phosphoserine (S821). Positions 861-872 (DTVSEEKPESHN) are enriched in basic and acidic residues. The segment covering 873 to 885 (HGQNLFQSANSSD) has biased composition (polar residues). Phosphoserine is present on residues S910 and S923. The disordered stretch occupies residues 911–1005 (SKEPAVSANS…AVCLQNSENQ (95 aa)). Polar residues predominate over residues 917–943 (SANSTRSANILDSMNKSSRKSTSLNRM). K953 is modified (N6-acetyllysine). Polar residues predominate over residues 962 to 974 (KQASAASYFQKRT). The span at 975-987 (PQADKTEEVKENP) shows a compositional bias: basic and acidic residues. Over residues 988–1004 (KSSSSDAPAVCLQNSEN) the composition is skewed to polar residues. Positions 1004 to 1073 (NQRPKTGFQM…SDGAEAKKRK (70 aa)) form a DNA-binding region, HMG box. S1030 carries the post-translational modification Phosphoserine. Residues 1054 to 1074 (WTNKAKGETASDGAEAKKRKR) form a disordered region. A Glycyl lysine isopeptide (Lys-Gly) (interchain with G-Cter in SUMO1); alternate cross-link involves residue K1116. K1116 participates in a covalent cross-link: Glycyl lysine isopeptide (Lys-Gly) (interchain with G-Cter in SUMO2); alternate.

As to quaternary structure, trimer. Interacts with the polymerase alpha catalytic subunit POLA1. Interacts with MCM10. Interacts with DNA2. Interacts with CDC45 and GINS2 subunit of GINS complex; these interactions associate WDHD1 with the CMG helicase complex.

The protein resides in the nucleus. The protein localises to the nucleoplasm. Core replisome component that acts as a replication initiation factor. Binds directly to the CMG complex and functions as a hub to recruit additional proteins to the replication fork. In Mus musculus (Mouse), this protein is WD repeat and HMG-box DNA-binding protein 1 (Wdhd1).